The sequence spans 199 residues: Urease accessory protein UreG (199 aa).

8–15 contacts GTP; that stretch reads GPVGSGKT.

It belongs to the SIMIBI class G3E GTPase family. UreG subfamily. As to quaternary structure, homodimer. UreH, UreF and UreG form a complex that acts as a GTP-hydrolysis-dependent molecular chaperone, activating the urease apoprotein by helping to assemble the nickel containing metallocenter of UreC. The UreE protein probably delivers the nickel.

It localises to the cytoplasm. Its function is as follows. Facilitates the functional incorporation of the urease nickel metallocenter. This process requires GTP hydrolysis, probably effectuated by UreG. The polypeptide is Urease accessory protein UreG (Helicobacter pylori (strain G27)).